We begin with the raw amino-acid sequence, 45 residues long: MFKRKSTAELAAQMAKLNGNKGFSSEDKGEWKLKLDNAGNGQAVI.

Homodimer in the absence of DNA, monomer when binding DNA.

In terms of biological role, binds preferentially to single-stranded DNA and therefore, destabilizes double-stranded DNA. It is involved in DNA replication, repair and recombination. Binds ss-DNA as the replication fork advances and stimulates the replisome processivity and accuracy. The protein is Single-stranded DNA-binding protein (32) of Enterobacteria phage RB3 (Bacteriophage RB3).